The sequence spans 300 residues: Arginine/serine-rich protein 1 (300 aa).

Positions M1 to Y142 are disordered. A Phosphoserine modification is found at S17. Residues S23–S36 are compositionally biased toward low complexity. Over residues S37–R104 the composition is skewed to basic residues. The span at Y105 to R115 shows a compositional bias: basic and acidic residues. Over residues R116–R125 the composition is skewed to low complexity. 2 positions are modified to phosphoserine: S120 and S122. Positions S126 to S141 are enriched in basic residues. Position 147 is an omega-N-methylarginine (R147). Residues Q222 to V300 form a disordered region. Basic and acidic residues predominate over residues P268–V277. At S284 the chain carries Phosphoserine.

This sequence belongs to the RSRP family. In terms of processing, phosphorylated. Phosphorylation at Ser-120 and Ser-122 mediates the interaction with spliceosome proteins.

Its subcellular location is the nucleus. Its function is as follows. Probably acts as a spliceosomal factor that contributes to spliceosome assembly and regulates the isoform switching of proteins such as PARP6. This chain is Arginine/serine-rich protein 1 (Rsrp1), found in Rattus norvegicus (Rat).